The following is a 346-amino-acid chain: Phenylalanine--tRNA ligase alpha subunit (346 aa).

Glutamate 258 is a binding site for Mg(2+).

This sequence belongs to the class-II aminoacyl-tRNA synthetase family. Phe-tRNA synthetase alpha subunit type 1 subfamily. In terms of assembly, tetramer of two alpha and two beta subunits. It depends on Mg(2+) as a cofactor.

It is found in the cytoplasm. It catalyses the reaction tRNA(Phe) + L-phenylalanine + ATP = L-phenylalanyl-tRNA(Phe) + AMP + diphosphate + H(+). The chain is Phenylalanine--tRNA ligase alpha subunit from Protochlamydia amoebophila (strain UWE25).